Consider the following 1250-residue polypeptide: Nucleoporin pom152 (1250 aa).

A pore side region spans residues 1-79; sequence MVTRVASSER…IYLRLLPKFR (79 aa). A helical transmembrane segment spans residues 80–100; it reads IPWLSFQPAATLLQIAIFAAI. Residues 101–1250 form a cisternal side region; the sequence is NLLLSSLSSL…PQDSTSSSNI (1150 aa).

In terms of assembly, component of the nuclear pore complex (NPC). NPC constitutes the exclusive means of nucleocytoplasmic transport. NPCs allow the passive diffusion of ions and small molecules and the active, nuclear transport receptor-mediated bidirectional transport of macromolecules such as proteins, RNAs, ribonucleoparticles (RNPs), and ribosomal subunits across the nuclear envelope.

It is found in the nucleus. The protein resides in the nuclear pore complex. It localises to the nucleus membrane. Its function is as follows. Functions as a component of the nuclear pore complex (NPC). NPC components, collectively referred to as nucleoporins (NUPs), can play the role of both NPC structural components and of docking or interaction partners for transiently associated nuclear transport factors. This chain is Nucleoporin pom152 (pom152), found in Schizosaccharomyces pombe (strain 972 / ATCC 24843) (Fission yeast).